The sequence spans 436 residues: uncharacterized protein (436 aa).

This is an uncharacterized protein from Haemophilus influenzae (strain ATCC 51907 / DSM 11121 / KW20 / Rd).